The chain runs to 156 residues: Cyclic pyranopterin monophosphate synthase (156 aa).

Substrate-binding positions include 73–75 (LCH) and 110–111 (ME). Residue Asp125 is part of the active site.

This sequence belongs to the MoaC family. In terms of assembly, homohexamer; trimer of dimers.

It carries out the reaction (8S)-3',8-cyclo-7,8-dihydroguanosine 5'-triphosphate = cyclic pyranopterin phosphate + diphosphate. Its pathway is cofactor biosynthesis; molybdopterin biosynthesis. In terms of biological role, catalyzes the conversion of (8S)-3',8-cyclo-7,8-dihydroguanosine 5'-triphosphate to cyclic pyranopterin monophosphate (cPMP). The chain is Cyclic pyranopterin monophosphate synthase from Pseudomonas putida (strain GB-1).